A 205-amino-acid chain; its full sequence is Thymidylate kinase (205 aa).

10-17 (GIDGAGKS) serves as a coordination point for ATP.

The protein belongs to the thymidylate kinase family.

The enzyme catalyses dTMP + ATP = dTDP + ADP. In terms of biological role, phosphorylation of dTMP to form dTDP in both de novo and salvage pathways of dTTP synthesis. In Ralstonia pickettii (strain 12J), this protein is Thymidylate kinase.